A 623-amino-acid polypeptide reads, in one-letter code: uncharacterized protein (623 aa).

A compositionally biased stretch (basic and acidic residues) spans 157-166 (LNESPLRDQQ). The disordered stretch occupies residues 157–237 (LNESPLRDQQ…QGLPDHNNSI (81 aa)). The segment covering 167-177 (ESSTPSKNSTL) has biased composition (polar residues). Residues 193–210 (AFRPLPSPSRRSSQSAPA) show a composition bias toward low complexity.

This is an uncharacterized protein from Macaca fascicularis (Crab-eating macaque).